A 192-amino-acid polypeptide reads, in one-letter code: uncharacterized protein (192 aa).

This is an uncharacterized protein from Haemophilus influenzae (strain ATCC 51907 / DSM 11121 / KW20 / Rd).